Reading from the N-terminus, the 234-residue chain is Conidial surface nicotinamide adenine dinucleotide glycohydrolase nadA (234 aa).

Residues 1 to 20 form the signal peptide; it reads MIFTNAILVISALLPATVLS. The segment at 21–117 is thump; it reads LQHTEDSLFP…LDTEEQPILG (97 aa). 2 disulfides stabilise this stretch: cysteine 33/cysteine 80 and cysteine 38/cysteine 50. Residues asparagine 45, asparagine 95, and asparagine 118 are each glycosylated (N-linked (GlcNAc...) asparagine). Residues 120 to 212 enclose the TNT domain; the sequence is TLPVGMKLDR…GLIDDGYLRR (93 aa). Residue arginine 129 is part of the active site. Phenylalanine 130, threonine 136, and arginine 148 together coordinate NAD(+). The active site involves glutamine 194. Residues serine 216, aspartate 219, glutamate 220, and glutamate 223 each coordinate Ca(2+).

It belongs to the fungal surface NADase family. As to quaternary structure, homodimer. Post-translationally, N-glycosylated.

It localises to the secreted. It carries out the reaction NAD(+) + H2O = ADP-D-ribose + nicotinamide + H(+). The enzyme catalyses NADP(+) + H2O = ADP-D-ribose 2'-phosphate + nicotinamide + H(+). The catalytic activity is positively regulated by calcium via its binding to the calcium-binding site. Its function is as follows. Conidial surface nicotinamide adenine dinucleotide glycohydrolase that cleave NAD(+) and NADP(+) but not their reduced counterparts, NADH and NADPH. Lacks both ADP-ribosyl cyclase and base exchange activity and does not mediate synthesis of calcium messengers cADPR or NAADP. Plays a role in pathogenicity by depleting the host's NAD(+) pool. In Aspergillus fumigatus (strain ATCC MYA-4609 / CBS 101355 / FGSC A1100 / Af293) (Neosartorya fumigata), this protein is Conidial surface nicotinamide adenine dinucleotide glycohydrolase nadA.